A 188-amino-acid polypeptide reads, in one-letter code: Large ribosomal subunit protein bL32m (188 aa).

Zn(2+) contacts are provided by C110, C113, C123, and C126. Residues 164–188 form a disordered region; that stretch reads TPSEQDQGKRIIERDRKRPSWFTQN. Basic and acidic residues predominate over residues 169-181; the sequence is DQGKRIIERDRKR.

The protein belongs to the bacterial ribosomal protein bL32 family. As to quaternary structure, component of the mitochondrial large ribosomal subunit (mt-LSU). Mature mammalian 55S mitochondrial ribosomes consist of a small (28S) and a large (39S) subunit. The 28S small subunit contains a 12S ribosomal RNA (12S mt-rRNA) and 30 different proteins. The 39S large subunit contains a 16S rRNA (16S mt-rRNA), a copy of mitochondrial valine transfer RNA (mt-tRNA(Val)), which plays an integral structural role, and 52 different proteins. bL32m has a zinc binding site. Post-translationally, MRPL32 precursor is processed by the m-AAA protease (composed of AFG3L2 and SPG7), which cleaves the N-terminal transit peptide. Cleavage by the m-AAA protease takes place prior to assembly into the large subunit, an essential step for mitochondrial ribosome (mitoribosome) assembly. Proper processing by the m-AAA protease is dependent on the zinc-binding region within the tightly folded C-terminal domain of MRPL32: zinc-dependent folding halts degradation initiated from the N-terminus and triggers the release of mature MRPL32.

Its subcellular location is the mitochondrion. Functionally, component of the mitochondrial large ribosomal subunit (mt-LSU). The mitochondrial ribosome (mitoribosome) is a large ribonucleoprotein complex responsible for the synthesis of proteins inside mitochondria. This is Large ribosomal subunit protein bL32m (MRPL32) from Homo sapiens (Human).